Here is a 382-residue protein sequence, read N- to C-terminus: Sphingosine 1-phosphate receptor 1 (382 aa).

An N-acetylvaline modification is found at valine 2. The Extracellular segment spans residues 2–46 (VSTSIPEVKALRSSVSDYGNYDIIVRHYNYTGKLNIGAEKDHGIK). Position 10 is an N6-acetyllysine (lysine 10). Residue asparagine 30 is glycosylated (N-linked (GlcNAc...) asparagine). Residues 47–68 (LTSVVFILICCFIILENIFVLL) traverse the membrane as a helical segment. The Cytoplasmic segment spans residues 69–82 (TIWKTKKFHRPMYY). The chain crosses the membrane as a helical span at residues 83–104 (FIGNLALSDLLAGVAYTANLLL). Topologically, residues 105 to 116 (SGATTYKLTPAQ) are extracellular. A helical transmembrane segment spans residues 117–138 (WFLREGSMFVALSASVFSLLAI). Residue 120–121 (RE) coordinates sphing-4-enine 1-phosphate. At 139 to 160 (AIERYITMLKMKLHNGSNSSRS) the chain is on the cytoplasmic side. The helical transmembrane segment at 161 to 182 (FLLISACWVISLILGGLPIMGW) threads the bilayer. Topologically, residues 183 to 196 (NCISSLSSCSTVLP) are extracellular. Cysteine 184 and cysteine 191 are oxidised to a cystine. A helical transmembrane segment spans residues 197–224 (LYHKHYILFCTTVFTLLLLSIVILYCRI). At 225 to 257 (YSLVRTRSRRLTFRKNISKASRSSEKSLALLKT) the chain is on the cytoplasmic side. Threonine 236 bears the Phosphothreonine mark. The helical transmembrane segment at 258–278 (VIIVLSVFIACWAPLFILLLL) threads the bilayer. Residue 265-269 (FIACW) participates in sphing-4-enine 1-phosphate binding. The Extracellular portion of the chain corresponds to 279–289 (DVGCKAKTCDI). A disulfide bond links cysteine 282 and cysteine 287. The chain crosses the membrane as a helical span at residues 290–310 (LYKAEYFLVLAVLNSGTNPII). Over 311-382 (YTLTNKEMRR…MSSGNVNSSS (72 aa)) the chain is Cytoplasmic. A lipid anchor (S-palmitoyl cysteine) is attached at cysteine 328. The interval 348–382 (MEFSRSKSDNSSHPQKDDGDNPETIMSSGNVNSSS) is disordered. Serine 351 and serine 353 each carry phosphoserine. Basic and acidic residues predominate over residues 351-366 (SRSKSDNSSHPQKDDG). Polar residues predominate over residues 371–382 (TIMSSGNVNSSS).

Belongs to the G-protein coupled receptor 1 family. In terms of assembly, interacts with GNAI1 and GNAI3. Interacts with CD69; this interaction promotes S1PR1 degradation. In terms of processing, palmitoylated by ZDHHC5. Palmitoylation is required for targeting to plasma membrane, enabling G(i) coupling. As to expression, expressed in a wide variety of tissues with highest levels in brain, heart and spleen. Lower levels found in kidney, liver, lung, muscle, placenta, thymus, and uterus. Very low levels in intestine, stomach and testis. According to PubMed:9931453, expressed modestly in apparent endothelial cells surrounding some blood vessels (e.g. aortic trunk).

The protein resides in the cell membrane. Its subcellular location is the endosome. The protein localises to the membrane raft. In terms of biological role, G-protein coupled receptor for the bioactive lysosphingolipid sphingosine 1-phosphate (S1P) that seems to be coupled to the G(i) subclass of heteromeric G proteins. Signaling leads to the activation of RAC1, SRC, PTK2/FAK1 and MAP kinases. Plays an important role in cell migration, probably via its role in the reorganization of the actin cytoskeleton and the formation of lamellipodia in response to stimuli that increase the activity of the sphingosine kinase SPHK1. Required for normal chemotaxis toward sphingosine 1-phosphate. Required for normal embryonic heart development and normal cardiac morphogenesis. Plays an important role in the regulation of sprouting angiogenesis and vascular maturation. Inhibits sprouting angiogenesis to prevent excessive sprouting during blood vessel development. Required for normal egress of mature T-cells from the thymus into the blood stream and into peripheral lymphoid organs. Plays a role in the migration of osteoclast precursor cells, the regulation of bone mineralization and bone homeostasis. Plays a role in responses to oxidized 1-palmitoyl-2-arachidonoyl-sn-glycero-3-phosphocholine by pulmonary endothelial cells and in the protection against ventilator-induced lung injury. This is Sphingosine 1-phosphate receptor 1 from Mus musculus (Mouse).